The primary structure comprises 558 residues: Protein shisa-7 (558 aa).

An N-terminal signal peptide occupies residues 1–22 (MPALLLLGTVALLASAAGPAGA). The Extracellular portion of the chain corresponds to 23–189 (RPSNDTSSVA…GGEGPGGSTA (167 aa)). The N-linked (GlcNAc...) asparagine glycan is linked to N26. Disordered stretches follow at residues 53–79 (GGSA…ARAP) and 142–181 (TPPP…GRGG). A compositionally biased stretch (low complexity) spans 57 to 77 (AGTSANATKTSPASGTGAAAR). Gly residues predominate over residues 148–181 (GGAGGAGGAGGGPGPGQAGWLEGGRAGGAGGRGG). Residues 154–175 (GGAGGGPGPGQAGWLEGGRAGG) are GRID. Residues 190 to 210 (YVVCGVISFALAVGVGAKVAF) traverse the membrane as a helical segment. Residues 211-558 (SKASRAPRAH…RTASKNEVTV (348 aa)) are Cytoplasmic-facing. The tract at residues 236 to 263 (QAGPATRPDRARSSSLTPGLGGPDSMAP) is disordered. The residue at position 438 (S438) is a Phosphoserine. Positions 443–506 (RQSREHLLSP…HHHHALHGSP (64 aa)) are disordered. The span at 453-462 (PRSPALPPDP) shows a compositional bias: pro residues. The span at 466–477 (ASLAASHSNLLL) shows a compositional bias: low complexity. A Phosphothreonine modification is found at T532. The short motif at 555 to 558 (EVTV) is the PDZ-binding element.

Belongs to the shisa family. Interacts with GABA(A)R (GABA type A receptor) subunits GABRA1, GABRA2 and GABRG2; the interaction is direct. Does not interact with GABRB2 and GABRB3 subunits. Interacts with AMPAR subunits GRIA1, GRIA2 and GRIA3 and AMPAR auxiliary proteins SHISA6 and SHISA7 in heterologous cells. Interacts (via PDZ-binding motif) with DLG4/PSD-95 (via PDZ domain)in heterologous cells; the interaction is direct. In terms of processing, N-glycosylated. Mainly expressed in neurons. Highly expressed in brain structures including cortex, striatum, olfactory bulb, amygdala hippocampus CA1-3 and dentate gyrus (at protein level).

Its subcellular location is the postsynaptic density membrane. Its function is as follows. Transmembrane protein that regulates gamma-aminobutyric acid type A receptor (GABA(A)R) trafficking, channel deactivation kinetics and pharmacology, necessary for fast inhibitory transmission in the brain. Enhances the action of benzodiazepine, a primary GABA(A)Rs target drug, in the brain. May affect channel kinetics of AMPA-type glutamate receptors (AMPAR), the brain's main excitatory neurotransmitter, necessary for synaptic hippocampal plasticity, and memory recall. May regulate the induction and maintenance of long-term potentiation at Schaffer collaterals/CA3-CA1 excitatory synapses. This chain is Protein shisa-7, found in Mus musculus (Mouse).